We begin with the raw amino-acid sequence, 429 residues long: SVP1-like protein 2 (429 aa).

WD repeat units follow at residues 10-48 (PVLA…LRTS), 50-96 (DFGA…QVGV), 178-218 (AHTS…RLYE), and 223-262 (IDKA…GTRP). Residues 262–297 (PITSNGGTAYAAGEPSVTGNNRPSSPYSVASSSGGG) are disordered.

It belongs to the WD repeat PROPPIN family.

The protein resides in the vacuole membrane. It localises to the cytoplasmic vesicle membrane. Its function is as follows. Involved in mitochondrial or peroxisomal functions and amino acid signaling pathways. The polypeptide is SVP1-like protein 2 (apg-14) (Neurospora crassa (strain ATCC 24698 / 74-OR23-1A / CBS 708.71 / DSM 1257 / FGSC 987)).